A 52-amino-acid polypeptide reads, in one-letter code: Ribosome biogenesis protein Nop10 (52 aa).

Belongs to the NOP10 family.

Involved in ribosome biogenesis; more specifically in 18S rRNA pseudouridylation and in cleavage of pre-rRNA. This Methanococcus vannielii (strain ATCC 35089 / DSM 1224 / JCM 13029 / OCM 148 / SB) protein is Ribosome biogenesis protein Nop10.